Here is a 151-residue protein sequence, read N- to C-terminus: Transcription antitermination protein NusB (151 aa).

It belongs to the NusB family.

Functionally, involved in transcription antitermination. Required for transcription of ribosomal RNA (rRNA) genes. Binds specifically to the boxA antiterminator sequence of the ribosomal RNA (rrn) operons. The polypeptide is Transcription antitermination protein NusB (Hamiltonella defensa subsp. Acyrthosiphon pisum (strain 5AT)).